The sequence spans 244 residues: Cell division protein ZapD (244 aa).

The protein belongs to the ZapD family. Interacts with FtsZ.

It is found in the cytoplasm. Cell division factor that enhances FtsZ-ring assembly. Directly interacts with FtsZ and promotes bundling of FtsZ protofilaments, with a reduction in FtsZ GTPase activity. This Shewanella baltica (strain OS223) protein is Cell division protein ZapD.